Here is a 308-residue protein sequence, read N- to C-terminus: tRNA pseudouridine synthase B (308 aa).

Asp33 (nucleophile) is an active-site residue.

Belongs to the pseudouridine synthase TruB family. Type 1 subfamily.

It catalyses the reaction uridine(55) in tRNA = pseudouridine(55) in tRNA. Its function is as follows. Responsible for synthesis of pseudouridine from uracil-55 in the psi GC loop of transfer RNAs. The polypeptide is tRNA pseudouridine synthase B (Nitrosomonas europaea (strain ATCC 19718 / CIP 103999 / KCTC 2705 / NBRC 14298)).